The chain runs to 507 residues: 2,3-bisphosphoglycerate-independent phosphoglycerate mutase (507 aa).

Residues Asp11 and Ser61 each contribute to the Mn(2+) site. Ser61 functions as the Phosphoserine intermediate in the catalytic mechanism. Residues His122, 152–153 (RD), Arg183, Arg189, 258–261 (RNDR), and Lys332 each bind substrate. Asp399, His403, Asp440, His441, and His458 together coordinate Mn(2+).

It belongs to the BPG-independent phosphoglycerate mutase family. Monomer. Mn(2+) is required as a cofactor.

The enzyme catalyses (2R)-2-phosphoglycerate = (2R)-3-phosphoglycerate. The protein operates within carbohydrate degradation; glycolysis; pyruvate from D-glyceraldehyde 3-phosphate: step 3/5. Functionally, catalyzes the interconversion of 2-phosphoglycerate and 3-phosphoglycerate. This is 2,3-bisphosphoglycerate-independent phosphoglycerate mutase from Parabacteroides distasonis (strain ATCC 8503 / DSM 20701 / CIP 104284 / JCM 5825 / NCTC 11152).